The chain runs to 563 residues: Alpha-keto-acid decarboxylase (563 aa).

Glutamate 59 contributes to the thiamine diphosphate binding site. The segment at 348-367 (SPPVASPPAEPLPPPPPREQ) is disordered. A compositionally biased stretch (pro residues) spans 351 to 366 (VASPPAEPLPPPPPRE). Positions 394-476 (TSFYGMADHR…VVVNNDGYTV (83 aa)) are thiamine pyrophosphate binding. Mg(2+) contacts are provided by aspartate 444, asparagine 471, and glycine 473.

Belongs to the TPP enzyme family. It depends on a metal cation as a cofactor. Thiamine diphosphate is required as a cofactor.

In terms of biological role, decarboxylates branched-chain and aromatic alpha-keto acids to aldehydes. In Mycobacterium avium (strain 104), this protein is Alpha-keto-acid decarboxylase (kdc).